Here is a 383-residue protein sequence, read N- to C-terminus: MQTWQLPEHIADVLPTNARQLESAREQLLALFRVHGYELVQPPLMEYAHSLLTHIDAGLSLKTILVTDRLSGRQLGIRADITPQVARIDAHLLSANQGINRLCYAGPVLHAQPDGLLNMREPLQAGAEMYGFADIRGDIELIDLMLKSMKIADMGKVLLSLGHIGIFRALSDAAHLDAGQSATLLALMQDKDTGTVEAQVKAWKLDGMWAKAFSLLPRLYGGREVLSDARGRLPDLSAVGGALDELQAVCDAFPDCEIHIDLSELRVDNYHTGLLYAAYAADFHDAVARGGRYDGLGGYFGRARPATGFSFDLRSFIGRLPTSERQPAVLVDAEDAEAAREAVEALREQGQCVVIDYGIGHNVSEELAGRLKKTDGVWQVVKR.

The protein belongs to the class-II aminoacyl-tRNA synthetase family. HisZ subfamily. As to quaternary structure, heteromultimer composed of HisG and HisZ subunits.

It is found in the cytoplasm. It functions in the pathway amino-acid biosynthesis; L-histidine biosynthesis; L-histidine from 5-phospho-alpha-D-ribose 1-diphosphate: step 1/9. In terms of biological role, required for the first step of histidine biosynthesis. May allow the feedback regulation of ATP phosphoribosyltransferase activity by histidine. The protein is ATP phosphoribosyltransferase regulatory subunit of Neisseria meningitidis serogroup C / serotype 2a (strain ATCC 700532 / DSM 15464 / FAM18).